The sequence spans 418 residues: MIFDKDDFKAYDADLWNAIAKEEERQQNNIELIASENVVSKAVMAAQGSILTNKYAEGYPGRRYYGGTDVVDVVETLAIERAKEIFGAKFANVQPHSGSQANCAAYMSLIEPGDTVMGMDLAAGGHLTHGAPVSFSGQTYNFLSYSVDPETELLDFDAILKQAQEVKPKLIVAGASAYSQIIDFSKFREIADAVGAKLMVDMAHIAGLVAAGLHPSPVPYAHITTTTTHKTLRGPRGGLILTNDEDLAKKINSAIFPGIQGGPLEHVVAAKAVSFKEVLDPAFKEYAANVIKNSKAMADVFLQDPDFRIISGGTENHLFLVDVTKVVENGKVAQNLLDEVNITLNKNSIPYETLSPFKTSGIRIGAAAITARGFGEEESRKVAELIIKTLKNSENEAVLEEVRSAVKELTDAFPLYEE.

(6S)-5,6,7,8-tetrahydrofolate contacts are provided by residues Leu121 and 125-127 (GHL). Lys230 carries the N6-(pyridoxal phosphate)lysine modification. Position 355–357 (355–357 (SPF)) interacts with (6S)-5,6,7,8-tetrahydrofolate.

This sequence belongs to the SHMT family. As to quaternary structure, homodimer. It depends on pyridoxal 5'-phosphate as a cofactor.

The protein localises to the cytoplasm. The enzyme catalyses (6R)-5,10-methylene-5,6,7,8-tetrahydrofolate + glycine + H2O = (6S)-5,6,7,8-tetrahydrofolate + L-serine. Its pathway is one-carbon metabolism; tetrahydrofolate interconversion. It functions in the pathway amino-acid biosynthesis; glycine biosynthesis; glycine from L-serine: step 1/1. Its function is as follows. Catalyzes the reversible interconversion of serine and glycine with tetrahydrofolate (THF) serving as the one-carbon carrier. This reaction serves as the major source of one-carbon groups required for the biosynthesis of purines, thymidylate, methionine, and other important biomolecules. Also exhibits THF-independent aldolase activity toward beta-hydroxyamino acids, producing glycine and aldehydes, via a retro-aldol mechanism. The protein is Serine hydroxymethyltransferase of Streptococcus pneumoniae (strain P1031).